The primary structure comprises 1624 residues: ATP-binding cassette sub-family A member 6 (1624 aa).

The helical transmembrane segment at 31 to 51 threads the bilayer; the sequence is LLEWSIPIIIGLHMGLFSYLA. N-linked (GlcNAc...) asparagine glycosylation is found at Asn84 and Asn91. 6 helical membrane passes run 222–242, 267–287, 297–317, 326–346, 356–376, and 395–415; these read IFIL…SSNV, WGLI…IIIT, FLVI…VTFL, VLTN…GFTV, EWVL…KVIF, and VMIA…VLAL. The 236-residue stretch at 478-713 folds into the ABC transporter 1 domain; it reads IRIRNIKKEY…WGLGYHLSLF (236 aa). 514-521 serves as a coordination point for ATP; sequence GHSGAGKS. The N-linked (GlcNAc...) asparagine glycan is linked to Asn576. The next 8 membrane-spanning stretches (helical) occupy residues 854–874, 971–991, 1005–1025, 1058–1078, 1094–1114, 1130–1150, 1154–1174, and 1194–1214; these read AFLI…IEYV, LHCF…MLNH, FIVL…CVIC, WCGQ…TSYF, IVFS…FLTY, WSIC…NGPF, LVIS…LVVL, and AVDL…IFVL. One can recognise an ABC transporter 2 domain in the interval 1282-1520; that stretch reads LHKEYAGQKK…FGQDYVLELR (239 aa). 1320-1327 lines the ATP pocket; sequence GPDGAGKS.

This sequence belongs to the ABC transporter superfamily. ABCA family. As to expression, widely expressed with higher expression in heart, lung, brain, spleen and testis.

It localises to the golgi apparatus membrane. In terms of biological role, probable transporter which may play a role in macrophage lipid transport and homeostasis. The chain is ATP-binding cassette sub-family A member 6 (Abca6) from Mus musculus (Mouse).